The chain runs to 206 residues: Protein Nef (206 aa).

Gly-2 is lipidated: N-myristoyl glycine; by host. Ser-6 bears the Phosphoserine; by host mark. The segment at 62–65 is acidic; interacts with host PACS1 and PACS2; stabilizes the interaction of NEF/MHC-I with host AP1M1; necessary for MHC-I internalization; the sequence is EEEK. Residues 69 to 78 form an SH3-binding; interaction with Src family tyrosine kinases region; the sequence is PVTPQVPLRP. The PxxP; stabilizes the interaction of NEF/MHC-I with host AP1M1; necessary for MHC-I internalization signature appears at 72–75; that stretch reads PQVP. The mediates dimerization, Nef-PTE1 interaction stretch occupies residues 108–124; the sequence is DILDLWIYHTQGYFPDW. Positions 148-180 are binding to ATP6V1H; the sequence is VEPEKLEEANKGENTSLLHPVSLHGMDDPEREV. The short motif at 164–165 is the Dileucine internalization motif; necessary for CD4 internalization element; that stretch reads LL. Positions 174–175 match the Diacidic; necessary for CD4 internalization motif; that stretch reads DD.

Belongs to the lentivirus primate group Nef protein family. In terms of assembly, monomer; cytosolic form. Homodimer; membrane bound form. Interacts with Nef associated p21-activated kinase (PAK2); this interaction activates PAK2. Associates with the Nef-MHC-I-AP1 complex; this complex is required for MHC-I internalization. Interacts (via C-terminus) with host PI3-kinase. Interacts with host PACS1; this interaction seems to be weak. Interacts with host PACS2. Interacts with host LCK and MAPK3; these interactions inhibit the kinase activity of the latter. Interacts with host ATP6V1H; this interaction may play a role in CD4 endocytosis. Associates with the CD4-Nef-AP2 complex; this complex is required for CD4 internalization. Interacts with host AP2 subunit alpha and AP2 subunit sigma2. Interacts with TCR-zeta chain; this interaction up-regulates the Fas ligand (FasL) surface expression. Interacts with host HCK, LYN, and SRC; these interactions activate the Src family kinases. Interacts with MAP3K5; this interaction inhibits the Fas and TNFR-mediated death signals. Interacts with beta-COP and PTE1. Interacts with human RACK1; this increases Nef phosphorylation by PKC. Interacts with TP53; this interaction decreases the half-life of TP53, protecting the infected cell against p53-mediated apoptosis. The virion-associated Nef proteins are cleaved by the viral protease to release the soluble C-terminal core protein. Nef is probably cleaved concomitantly with viral structural proteins on maturation of virus particles. In terms of processing, myristoylated. Post-translationally, phosphorylated on serine residues, probably by host PKCdelta and theta.

Its subcellular location is the host cell membrane. It localises to the virion. It is found in the secreted. The protein localises to the host Golgi apparatus membrane. Its function is as follows. Factor of infectivity and pathogenicity, required for optimal virus replication. Alters numerous pathways of T-lymphocyte function and down-regulates immunity surface molecules in order to evade host defense and increase viral infectivity. Alters the functionality of other immunity cells, like dendritic cells, monocytes/macrophages and NK cells. In infected CD4(+) T-lymphocytes, down-regulates the surface MHC-I, mature MHC-II, CD4, CD28, CCR5 and CXCR4 molecules. Mediates internalization and degradation of host CD4 through the interaction of with the cytoplasmic tail of CD4, the recruitment of AP-2 (clathrin adapter protein complex 2), internalization through clathrin coated pits, and subsequent transport to endosomes and lysosomes for degradation. Diverts host MHC-I molecules to the trans-Golgi network-associated endosomal compartments by an endocytic pathway to finally target them for degradation. MHC-I down-regulation may involve AP-1 (clathrin adapter protein complex 1) or possibly Src family kinase-ZAP70/Syk-PI3K cascade recruited by PACS2. In consequence infected cells are masked for immune recognition by cytotoxic T-lymphocytes. Decreasing the number of immune receptors also prevents reinfection by more HIV particles (superinfection). Down-regulates host SERINC3 and SERINC5 thereby excluding these proteins from the viral particles. Virion infectivity is drastically higher when SERINC3 or SERINC5 are excluded from the viral envelope, because these host antiviral proteins impair the membrane fusion event necessary for subsequent virion penetration. Functionally, bypasses host T-cell signaling by inducing a transcriptional program nearly identical to that of anti-CD3 cell activation. Interaction with TCR-zeta chain up-regulates the Fas ligand (FasL). Increasing surface FasL molecules and decreasing surface MHC-I molecules on infected CD4(+) cells send attacking cytotoxic CD8+ T-lymphocytes into apoptosis. In terms of biological role, plays a role in optimizing the host cell environment for viral replication without causing cell death by apoptosis. Protects the infected cells from apoptosis in order to keep them alive until the next virus generation is ready to strike. Inhibits the Fas and TNFR-mediated death signals by blocking MAP3K5/ASK1. Decreases the half-life of TP53, protecting the infected cell against p53-mediated apoptosis. Inhibits the apoptotic signals regulated by the Bcl-2 family proteins through the formation of a Nef/PI3-kinase/PAK2 complex that leads to activation of PAK2 and induces phosphorylation of host BAD. Its function is as follows. Extracellular Nef protein targets CD4(+) T-lymphocytes for apoptosis by interacting with CXCR4 surface receptors. This chain is Protein Nef, found in Homo sapiens (Human).